Consider the following 45-residue polypeptide: Osteocalcin (45 aa).

The region spanning 1–44 (AGTAXGDLTPFQLESLREVCEVNLACEHMADTXGIVAAYTAYYG) is the Gla domain. Residues E14, E18, E21, and E27 each coordinate Ca(2+). 3 positions are modified to 4-carboxyglutamate: E14, E18, and E21. A disulfide bridge connects residues C20 and C26.

This sequence belongs to the osteocalcin/matrix Gla protein family. Post-translationally, gamma-carboxyglutamate residues are formed by vitamin K dependent carboxylation by GGCX. These residues are essential for the binding of calcium.

The protein localises to the secreted. The carboxylated form is one of the main organic components of the bone matrix, which constitutes 1-2% of the total bone protein. The carboxylated form binds strongly to apatite and calcium. This Danio rerio (Zebrafish) protein is Osteocalcin (bglap).